Here is a 159-residue protein sequence, read N- to C-terminus: Probable carbonic anhydrase (159 aa).

Substrate-binding positions include 33–35 (RGD) and 48–49 (QD). Positions 54, 71, and 76 each coordinate Zn(2+).

The protein belongs to the gamma-class carbonic anhydrase family. It depends on Zn(2+) as a cofactor.

The enzyme catalyses hydrogencarbonate + H(+) = CO2 + H2O. Functionally, probably reversibly hydrates carbon dioxide. The protein is Probable carbonic anhydrase of Methanocaldococcus jannaschii (strain ATCC 43067 / DSM 2661 / JAL-1 / JCM 10045 / NBRC 100440) (Methanococcus jannaschii).